Here is a 774-residue protein sequence, read N- to C-terminus: Penicillin acylase 2 proenzyme (774 aa).

Ser-240 acts as the Nucleophile in catalysis.

This sequence belongs to the peptidase S45 family. Heterodimer of a small subunit and a large subunit processed from the same precursor.

It catalyses the reaction a penicillin + H2O = 6-aminopenicillanate + a carboxylate. This is Penicillin acylase 2 proenzyme (acyII) from Pseudomonas sp. (strain SE83).